The following is a 54-amino-acid chain: uncharacterized protein (54 aa).

This is an uncharacterized protein from Escherichia coli (strain K12).